A 372-amino-acid polypeptide reads, in one-letter code: NAD(P)H-quinone oxidoreductase subunit 1 (372 aa).

The next 8 helical transmembrane spans lie at 29–49 (WLPF…LVTV), 97–117 (LLFT…YLVV), 128–148 (LGVA…GLLM), 176–196 (LALA…IDIV), 204–224 (ILGW…IAVL), 254–274 (FALY…LVAV), 308–328 (TLGI…AVLL), and 351–371 (VALV…FAFG).

Belongs to the complex I subunit 1 family. In terms of assembly, NDH-1 is composed of at least 11 different subunits.

The protein resides in the cellular thylakoid membrane. It catalyses the reaction a plastoquinone + NADH + (n+1) H(+)(in) = a plastoquinol + NAD(+) + n H(+)(out). The enzyme catalyses a plastoquinone + NADPH + (n+1) H(+)(in) = a plastoquinol + NADP(+) + n H(+)(out). NDH-1 shuttles electrons from an unknown electron donor, via FMN and iron-sulfur (Fe-S) centers, to quinones in the respiratory and/or the photosynthetic chain. The immediate electron acceptor for the enzyme in this species is believed to be plastoquinone. Couples the redox reaction to proton translocation, and thus conserves the redox energy in a proton gradient. The sequence is that of NAD(P)H-quinone oxidoreductase subunit 1 from Trichodesmium erythraeum (strain IMS101).